A 168-amino-acid polypeptide reads, in one-letter code: Cell division inhibitor SulA (168 aa).

Positions A105–Y111 are ftsZ binding. Residues K161–H168 form a lon protease binding region.

It belongs to the SulA family. In terms of assembly, interacts with FtsZ. Post-translationally, is rapidly cleaved and degraded by the Lon protease once DNA damage is repaired.

Its function is as follows. Component of the SOS system and an inhibitor of cell division. Accumulation of SulA causes rapid cessation of cell division and the appearance of long, non-septate filaments. In the presence of GTP, binds a polymerization-competent form of FtsZ in a 1:1 ratio, thus inhibiting FtsZ polymerization and therefore preventing it from participating in the assembly of the Z ring. This mechanism prevents the premature segregation of damaged DNA to daughter cells during cell division. The protein is Cell division inhibitor SulA of Pectobacterium carotovorum subsp. carotovorum (strain PC1).